The chain runs to 304 residues: NAD kinase (304 aa).

The Proton acceptor role is filled by aspartate 77. Residues 77 to 78 (DG), arginine 82, 151 to 152 (NE), arginine 162, aspartate 181, and 192 to 197 (TAYSFS) each bind NAD(+).

It belongs to the NAD kinase family. It depends on a divalent metal cation as a cofactor.

Its subcellular location is the cytoplasm. It catalyses the reaction NAD(+) + ATP = ADP + NADP(+) + H(+). Its function is as follows. Involved in the regulation of the intracellular balance of NAD and NADP, and is a key enzyme in the biosynthesis of NADP. Catalyzes specifically the phosphorylation on 2'-hydroxyl of the adenosine moiety of NAD to yield NADP. In Leifsonia xyli subsp. xyli (strain CTCB07), this protein is NAD kinase.